The following is a 252-amino-acid chain: Imidazole glycerol phosphate synthase subunit HisF (252 aa).

Active-site residues include Asp11 and Asp130.

Belongs to the HisA/HisF family. Heterodimer of HisH and HisF.

The protein localises to the cytoplasm. The catalysed reaction is 5-[(5-phospho-1-deoxy-D-ribulos-1-ylimino)methylamino]-1-(5-phospho-beta-D-ribosyl)imidazole-4-carboxamide + L-glutamine = D-erythro-1-(imidazol-4-yl)glycerol 3-phosphate + 5-amino-1-(5-phospho-beta-D-ribosyl)imidazole-4-carboxamide + L-glutamate + H(+). It functions in the pathway amino-acid biosynthesis; L-histidine biosynthesis; L-histidine from 5-phospho-alpha-D-ribose 1-diphosphate: step 5/9. In terms of biological role, IGPS catalyzes the conversion of PRFAR and glutamine to IGP, AICAR and glutamate. The HisF subunit catalyzes the cyclization activity that produces IGP and AICAR from PRFAR using the ammonia provided by the HisH subunit. This is Imidazole glycerol phosphate synthase subunit HisF from Streptococcus sanguinis (strain SK36).